Reading from the N-terminus, the 254-residue chain is Acetylglutamate kinase (254 aa).

Residues 40-41 (GG), R62, and N158 contribute to the substrate site.

This sequence belongs to the acetylglutamate kinase family. ArgB subfamily.

It is found in the cytoplasm. The enzyme catalyses N-acetyl-L-glutamate + ATP = N-acetyl-L-glutamyl 5-phosphate + ADP. Its pathway is amino-acid biosynthesis; L-arginine biosynthesis; N(2)-acetyl-L-ornithine from L-glutamate: step 2/4. Its function is as follows. Catalyzes the ATP-dependent phosphorylation of N-acetyl-L-glutamate. The chain is Acetylglutamate kinase from Chloroflexus aggregans (strain MD-66 / DSM 9485).